The chain runs to 279 residues: NADPH-dependent 7-cyano-7-deazaguanine reductase (279 aa).

Ile86–Ser88 lines the substrate pocket. Position 88-89 (Ser88–Lys89) interacts with NADPH. Cys187 (thioimide intermediate) is an active-site residue. Asp194 (proton donor) is an active-site residue. His226 to Glu227 is a binding site for substrate. Residue Arg255–Gly256 coordinates NADPH.

The protein belongs to the GTP cyclohydrolase I family. QueF type 2 subfamily. Homodimer.

It localises to the cytoplasm. The catalysed reaction is 7-aminomethyl-7-carbaguanine + 2 NADP(+) = 7-cyano-7-deazaguanine + 2 NADPH + 3 H(+). Its pathway is tRNA modification; tRNA-queuosine biosynthesis. Functionally, catalyzes the NADPH-dependent reduction of 7-cyano-7-deazaguanine (preQ0) to 7-aminomethyl-7-deazaguanine (preQ1). The sequence is that of NADPH-dependent 7-cyano-7-deazaguanine reductase from Actinobacillus pleuropneumoniae serotype 7 (strain AP76).